Here is a 453-residue protein sequence, read N- to C-terminus: Tubulin beta-1 chain (453 aa).

Positions 12, 71, 140, 144, 145, 146, 206, and 228 each coordinate GTP. Position 71 (Glu-71) interacts with Mg(2+). Positions 431–453 are disordered; that stretch reads TADGVEGYEEEGYENDHPEDDEE. A compositionally biased stretch (acidic residues) spans 436–453; that stretch reads EGYEEEGYENDHPEDDEE.

This sequence belongs to the tubulin family. As to quaternary structure, dimer of alpha and beta chains. A typical microtubule is a hollow water-filled tube with an outer diameter of 25 nm and an inner diameter of 15 nM. Alpha-beta heterodimers associate head-to-tail to form protofilaments running lengthwise along the microtubule wall with the beta-tubulin subunit facing the microtubule plus end conferring a structural polarity. Microtubules usually have 13 protofilaments but different protofilament numbers can be found in some organisms and specialized cells. The cofactor is Mg(2+).

The protein resides in the cytoplasm. It localises to the cytoskeleton. In terms of biological role, tubulin is the major constituent of microtubules, a cylinder consisting of laterally associated linear protofilaments composed of alpha- and beta-tubulin heterodimers. Microtubules grow by the addition of GTP-tubulin dimers to the microtubule end, where a stabilizing cap forms. Below the cap, tubulin dimers are in GDP-bound state, owing to GTPase activity of alpha-tubulin. This Chondrus crispus (Carrageen Irish moss) protein is Tubulin beta-1 chain (TUBB).